Here is a 132-residue protein sequence, read N- to C-terminus: Small ribosomal subunit protein uS8 (132 aa).

It belongs to the universal ribosomal protein uS8 family. As to quaternary structure, part of the 30S ribosomal subunit. Contacts proteins S5 and S12.

One of the primary rRNA binding proteins, it binds directly to 16S rRNA central domain where it helps coordinate assembly of the platform of the 30S subunit. The protein is Small ribosomal subunit protein uS8 of Saccharopolyspora erythraea (strain ATCC 11635 / DSM 40517 / JCM 4748 / NBRC 13426 / NCIMB 8594 / NRRL 2338).